The primary structure comprises 485 residues: Amino acid permease 1 (485 aa).

The span at 1–15 shows a compositional bias: polar residues; the sequence is MKSFNTEGHNHSTAE. The tract at residues 1 to 35 is disordered; sequence MKSFNTEGHNHSTAESGDAYTVSDPTKNVDEDGRE. Residues 1–40 lie on the Cytoplasmic side of the membrane; that stretch reads MKSFNTEGHNHSTAESGDAYTVSDPTKNVDEDGREKRTGT. The next 2 helical transmembrane spans lie at 41-61 and 62-82; these read WLTA…LSLA and WAIA…FSFI. Residues 83–129 are Cytoplasmic-facing; the sequence is TYFTSTMLADCYRAPDPVTGKRNYTYMDVVRSYLGGRKVQLCGVAQY. The helical transmembrane segment at 130-150 threads the bilayer; it reads GNLIGVTVGYTITASISLVAV. At 151–166 the chain is on the extracellular side; that stretch reads GKSNCFHDKGHTADCT. Residues 167–187 form a helical membrane-spanning segment; that stretch reads ISNYPYMAVFGIIQVILSQIP. Over 188–194 the chain is Cytoplasmic; sequence NFHKLSF. The helical transmembrane segment at 195-215 threads the bilayer; it reads LSIMAAVMSFTYATIGIGLAI. Over 216-245 the chain is Extracellular; the sequence is ATVAGGKVGKTSMTGTAVGVDVTAAQKIWR. The helical transmembrane segment at 246–266 threads the bilayer; sequence SFQAVGDIAFAYAYATVLIEI. At 267–285 the chain is on the cytoplasmic side; it reads QDTLRSSPAENKAMKRASL. The chain crosses the membrane as a helical span at residues 286 to 306; that stretch reads VGVSTTTFFYILCGCIGYAAF. Over 307–318 the chain is Extracellular; the sequence is GNNAPGDFLTDF. A helical transmembrane segment spans residues 319 to 339; that stretch reads GFFEPFWLIDFANACIAVHLI. The Cytoplasmic portion of the chain corresponds to 340–394; the sequence is GAYQVFAQPIFQFVEKKCNRNYPDNKFITSEYSVNVPFLGKFNISLFRLVWRTAY. Helical transmembrane passes span 395-415 and 416-436; these read VVIT…LGLI and GAAS…IAQT. The Cytoplasmic segment spans residues 437–450; that stretch reads KIKKYSARWIALKT. Residues 451–471 form a helical membrane-spanning segment; that stretch reads MCYVCLIVSLLAAAGSIAGLI. Over 472–485 the chain is Extracellular; the sequence is SSVKTYKPFRTMHE.

Belongs to the amino acid/polyamine transporter 2 family. Amino acid/auxin permease (AAAP) (TC 2.A.18.2) subfamily. In terms of tissue distribution, highly expressed in developing pods. Found in the endosperm and in the storage parenchyma and the outer epidermis cells of the developing embryo. Lower levels of expression in flowers, in the vascular system of the cotyledon and in the root epidermal cells, including root hairs and throughout the root tip.

Its subcellular location is the cell membrane. With respect to regulation, inhibited by carbonylcyanide m-chlorophenylhydrazone and diethylpyrocarbonate (DEPC). Its function is as follows. Amino acid-proton symporter. Stereospecific transporter with a broad specificity for histidine, glutamate and neutral amino acids. Reduced affinities for asparagine and valine. Involved in amino acid uptake from the apoplastic cavity into the embryo cells for storage protein accumulation and in root amino acid uptake. The protein is Amino acid permease 1 (AAP1) of Arabidopsis thaliana (Mouse-ear cress).